We begin with the raw amino-acid sequence, 118 residues long: UPF0134 protein MPN_287 (118 aa).

It belongs to the UPF0134 family.

The polypeptide is UPF0134 protein MPN_287 (Mycoplasma pneumoniae (strain ATCC 29342 / M129 / Subtype 1) (Mycoplasmoides pneumoniae)).